A 445-amino-acid polypeptide reads, in one-letter code: Phosphoglucosamine mutase (445 aa).

The active-site Phosphoserine intermediate is Ser-101. Mg(2+) is bound by residues Ser-101, Asp-240, Asp-242, and Asp-244. Ser-101 carries the post-translational modification Phosphoserine.

It belongs to the phosphohexose mutase family. Mg(2+) is required as a cofactor. Activated by phosphorylation.

It catalyses the reaction alpha-D-glucosamine 1-phosphate = D-glucosamine 6-phosphate. Catalyzes the conversion of glucosamine-6-phosphate to glucosamine-1-phosphate. This Pseudomonas fluorescens (strain Pf0-1) protein is Phosphoglucosamine mutase.